The primary structure comprises 292 residues: ATP-dependent Clp protease proteolytic subunit 4, chloroplastic (292 aa).

The N-terminal 65 residues, 1-65 (MGTLSLSSSL…LRFANASIEM (65 aa)), are a transit peptide targeting the chloroplast. At S66 the chain carries N-acetylserine. S158 functions as the Nucleophile in the catalytic mechanism. H183 is a catalytic residue.

The protein belongs to the peptidase S14 family. As to quaternary structure, component of the chloroplastic Clp protease core complex which consist of at least 16 proteins: CLPP4 (3 copies), CLPP5 (3 copies), CLPR4 (2 copies), ClpP1 (1 copy), CLPP6 (1 copy), CLPR2 (1 copy), CLPT1 (1 copy), CLPT2 (1 copy) and 3 copies of CLPP3 and/or CLPR1 and/or CLPR3. Interacts with CHIP. The core complex is organized in two heptameric rings, one containing CLPP3,4,5,6 in a 1:2:3:1 ratio and the other CLPP1 and CLPR1,2,3,4 in a 3:1:1:1:1 ratio. Post-translationally, ubiquitinated by CHIP. In terms of tissue distribution, mostly expressed in leaves. Also detected in stems, and to a lower extent, in roots (at protein level).

It is found in the plastid. It localises to the chloroplast stroma. It carries out the reaction Hydrolysis of proteins to small peptides in the presence of ATP and magnesium. alpha-casein is the usual test substrate. In the absence of ATP, only oligopeptides shorter than five residues are hydrolyzed (such as succinyl-Leu-Tyr-|-NHMec, and Leu-Tyr-Leu-|-Tyr-Trp, in which cleavage of the -Tyr-|-Leu- and -Tyr-|-Trp bonds also occurs).. Functionally, cleaves peptides in various proteins in a process that requires ATP hydrolysis. Has a chymotrypsin-like activity. Plays a major role in the degradation of misfolded proteins. Essential protein required for chloroplast development and integrity. Essential for Embryogenesis. This chain is ATP-dependent Clp protease proteolytic subunit 4, chloroplastic, found in Arabidopsis thaliana (Mouse-ear cress).